Here is a 159-residue protein sequence, read N- to C-terminus: Cyanate hydratase (159 aa).

Catalysis depends on residues arginine 103, glutamate 106, and serine 129.

This sequence belongs to the cyanase family.

The enzyme catalyses cyanate + hydrogencarbonate + 3 H(+) = NH4(+) + 2 CO2. Catalyzes the reaction of cyanate with bicarbonate to produce ammonia and carbon dioxide. The polypeptide is Cyanate hydratase (Blastomyces gilchristii (strain SLH14081) (Blastomyces dermatitidis)).